The following is a 376-amino-acid chain: Regulatory protein E2 (376 aa).

The interval 1–206 (METLANRLDV…HHAFDPVSST (206 aa)) is transactivation domain. The interval 211–271 (AAGPLCTGDT…TTERASQPLD (61 aa)) is disordered. Polar residues-rich tracts occupy residues 218–237 (GDTT…GPQQ) and 246–266 (NWEQ…TERA). Residues 294-376 (CAPVVHLKGD…VILGHMSMFV (83 aa)) form a DNA-binding domain region. Residue lysine 301 forms a Glycyl lysine isopeptide (Lys-Gly) (interchain with G-Cter in SUMO) linkage.

Belongs to the papillomaviridae E2 protein family. In terms of assembly, binds DNA as homodimer. Interacts with protein E1; this interaction greatly increases E1 DNA-binding activity. Interacts with protein L1; this interaction enhances E2-dependent replication and transcription activation. Interacts with protein L2; this interaction inhibits E2 transcriptional activity but not DNA replication function E2. Interacts with protein E7; this interaction inhibits E7 oncogenic activity. Interacts with host TAF1; this interaction modulates E2-dependent transcriptional regulation. Interacts with host BRD4; this interaction mediates E2 transcriptional activation function. Additionally, the interaction with host BRD4 on mitotic chromosomes mediates tethering of the viral genome. Interacts with host TOPBP1; this interaction is required for optimal viral DNA replication. Phosphorylated. In terms of processing, sumoylation plays a regulatory role in E2 transcriptional activity.

It is found in the host nucleus. In terms of biological role, plays a role in the initiation of viral DNA replication. A dimer of E2 interacts with a dimer of E1 in order to improve specificity of E1 DNA binding activity. Once the complex recognizes and binds DNA at specific sites, the E2 dimer is removed from DNA. E2 also regulates viral transcription through binding to the E2RE response element (5'-ACCNNNNNNGGT-3') present in multiple copies in the regulatory regions of the viral genome. Activates or represses transcription depending on E2RE's position with regards to proximal promoter elements including the TATA-box. Repression occurs by sterically hindering the assembly of the transcription initiation complex. The polypeptide is Regulatory protein E2 (Homo sapiens (Human)).